The primary structure comprises 329 residues: Sulfate/thiosulfate import ATP-binding protein CysA (329 aa).

An ABC transporter domain is found at 3-237 (IEVRNVSKRF…PANDFVYHFL (235 aa)). 35-42 (GPSGCGKT) lines the ATP pocket.

It belongs to the ABC transporter superfamily. Sulfate/tungstate importer (TC 3.A.1.6) family. As to quaternary structure, the complex is composed of two ATP-binding proteins (CysA), two transmembrane proteins (CysT and CysW) and a solute-binding protein (CysP).

It localises to the cell inner membrane. The enzyme catalyses sulfate(out) + ATP + H2O = sulfate(in) + ADP + phosphate + H(+). The catalysed reaction is thiosulfate(out) + ATP + H2O = thiosulfate(in) + ADP + phosphate + H(+). Functionally, part of the ABC transporter complex CysAWTP involved in sulfate/thiosulfate import. Responsible for energy coupling to the transport system. The chain is Sulfate/thiosulfate import ATP-binding protein CysA from Pseudomonas putida (strain ATCC 47054 / DSM 6125 / CFBP 8728 / NCIMB 11950 / KT2440).